Here is a 516-residue protein sequence, read N- to C-terminus: Bifunctional purine biosynthesis protein PurH (516 aa).

An MGS-like domain is found at 1–150 (MSDDRKQIKR…KNHPSVAVVV (150 aa)).

Belongs to the PurH family.

The catalysed reaction is (6R)-10-formyltetrahydrofolate + 5-amino-1-(5-phospho-beta-D-ribosyl)imidazole-4-carboxamide = 5-formamido-1-(5-phospho-D-ribosyl)imidazole-4-carboxamide + (6S)-5,6,7,8-tetrahydrofolate. The enzyme catalyses IMP + H2O = 5-formamido-1-(5-phospho-D-ribosyl)imidazole-4-carboxamide. The protein operates within purine metabolism; IMP biosynthesis via de novo pathway; 5-formamido-1-(5-phospho-D-ribosyl)imidazole-4-carboxamide from 5-amino-1-(5-phospho-D-ribosyl)imidazole-4-carboxamide (10-formyl THF route): step 1/1. Its pathway is purine metabolism; IMP biosynthesis via de novo pathway; IMP from 5-formamido-1-(5-phospho-D-ribosyl)imidazole-4-carboxamide: step 1/1. The sequence is that of Bifunctional purine biosynthesis protein PurH from Corynebacterium ammoniagenes (Brevibacterium ammoniagenes).